The primary structure comprises 204 residues: MTDRIARVERTTKESSITVELNLDGTGIVDVSTGVPFFDHMLTALGSHASFDLTVHAKGDIEIEAHHTVEDTSIVLGQALGQALGDKKGIRRFGDAFIPMDETLAHASVDVSGRPYCVHTGEPEHLLHSVIGGYPGVPYATVINRHVFESIALNARIALHVRVLYGRDQHHITEAEFKAVARALREAVEPDPRVTGVPSTKGSL.

Belongs to the imidazoleglycerol-phosphate dehydratase family.

It localises to the cytoplasm. It catalyses the reaction D-erythro-1-(imidazol-4-yl)glycerol 3-phosphate = 3-(imidazol-4-yl)-2-oxopropyl phosphate + H2O. The protein operates within amino-acid biosynthesis; L-histidine biosynthesis; L-histidine from 5-phospho-alpha-D-ribose 1-diphosphate: step 6/9. The sequence is that of Imidazoleglycerol-phosphate dehydratase from Rhodococcus jostii (strain RHA1).